We begin with the raw amino-acid sequence, 540 residues long: Solute carrier family 22 member 7 (540 aa).

Helical transmembrane passes span 21 to 41, 144 to 164, 172 to 192, 202 to 222, 232 to 252, 257 to 277, 344 to 364, 378 to 398, 402 to 422, 429 to 449, 462 to 484, and 488 to 510; these read LVLL…PIFM, VTST…GYLS, LLLV…ASVN, LTGS…LEWL, VIST…GYLI, WLLL…WWVP, VSLC…GLTL, LLFG…VRLV, LTEA…LLVS, ITAL…TAYL, TGMG…VVLL, and WLLL…VLLL.

It belongs to the major facilitator (TC 2.A.1) superfamily. Organic cation transporter (TC 2.A.1.19) family. Abundant expression in male and female kidney. In kidney, expressed at the brush border of the proximal tubule S3 segment (S3) in the outer stripe and medullary rays. In kidney, expression is higher in female than male. Also expressed in female liver.

The protein resides in the basolateral cell membrane. It localises to the apical cell membrane. It is found in the cell membrane. It carries out the reaction orotate(out) + L-glutamate(in) = orotate(in) + L-glutamate(out). The enzyme catalyses 3',5'-cyclic GMP(in) = 3',5'-cyclic GMP(out). It catalyses the reaction GMP(in) = GMP(out). The catalysed reaction is 2'-deoxyguanosine(in) = 2'-deoxyguanosine(out). It carries out the reaction GDP(in) = GDP(out). The enzyme catalyses guanosine(in) = guanosine(out). It catalyses the reaction GTP(in) = GTP(out). The catalysed reaction is 3',5'-cyclic AMP(in) = 3',5'-cyclic AMP(out). It carries out the reaction creatinine(in) = creatinine(out). The enzyme catalyses prostaglandin E2(out) = prostaglandin E2(in). It catalyses the reaction 2-oxoglutarate(in) = 2-oxoglutarate(out). The catalysed reaction is glutarate(in) = glutarate(out). It carries out the reaction urate(out) = urate(in). The enzyme catalyses estrone 3-sulfate(out) = estrone 3-sulfate(in). In terms of biological role, functions as a Na(+)-independent bidirectional multispecific transporter. Contributes to the renal and hepatic elimination of endogenous organic compounds from the systemic circulation into the urine and bile, respectively. Capable of transporting a wide range of purine and pyrimidine nucleobases, nucleosides, and nucleotides with cGMP, 2'deoxyguanosine and GMP being the preferred substrates. Functions as a pH- and chloride-independent cGMP bidirectional facilitative transporter that can regulate both intracellular and extracellular levels of cGMP and may be involved in cGMP signaling pathways. Mediates orotate/glutamate bidirectional exchange and most likely display a physiological role in hepatic release of glutamate into the blood. Involved in renal secretion and possible reabsorption of creatinine. Able to uptake prostaglandin E2 (PGE2) and may contribute to PGE2 renal excretion. Also transports alpha-ketoglutarate and urate. Unlike human hortolog, able to transport glutarate. Apart from the orotate/glutamate exchange, the counterions for the uptake of other SLC22A7/OAT2 substrates remain to be identified. This chain is Solute carrier family 22 member 7, found in Mus musculus (Mouse).